Consider the following 152-residue polypeptide: 1,4-dihydroxy-2-naphthoyl-CoA hydrolase (152 aa).

Residue aspartate 20 is part of the active site.

This sequence belongs to the 4-hydroxybenzoyl-CoA thioesterase family. DHNA-CoA hydrolase subfamily.

The catalysed reaction is 1,4-dihydroxy-2-naphthoyl-CoA + H2O = 1,4-dihydroxy-2-naphthoate + CoA + H(+). It participates in cofactor biosynthesis; phylloquinone biosynthesis. The protein operates within quinol/quinone metabolism; 1,4-dihydroxy-2-naphthoate biosynthesis; 1,4-dihydroxy-2-naphthoate from chorismate: step 7/7. Functionally, catalyzes the hydrolysis of 1,4-dihydroxy-2-naphthoyl-CoA (DHNA-CoA) to 1,4-dihydroxy-2-naphthoate (DHNA), a reaction involved in phylloquinone (vitamin K1) biosynthesis. The polypeptide is 1,4-dihydroxy-2-naphthoyl-CoA hydrolase (Synechococcus sp. (strain CC9311)).